The sequence spans 226 residues: UPF0173 metal-dependent hydrolase Msed_2125 (226 aa).

The protein belongs to the UPF0173 family.

This is UPF0173 metal-dependent hydrolase Msed_2125 from Metallosphaera sedula (strain ATCC 51363 / DSM 5348 / JCM 9185 / NBRC 15509 / TH2).